Consider the following 135-residue polypeptide: Membrane-anchored ubiquitin-fold protein 4 (135 aa).

Residues 1 to 20 are disordered; that stretch reads MAEKEEGKVAAEGGAEAEAD. Residues 23 to 92 enclose the Ubiquitin-like domain; that stretch reads VEVKFRLFDG…NDKNIAQCRA (70 aa). Cys-132 carries the post-translational modification Cysteine methyl ester. Residue Cys-132 is the site of S-geranylgeranyl cysteine attachment. Positions 133 to 135 are cleaved as a propeptide — removed in mature form; that stretch reads TIL.

It is found in the cell membrane. In terms of biological role, may serve as docking site to facilitate the association of other proteins to the plasma membrane. The chain is Membrane-anchored ubiquitin-fold protein 4 (MUB4) from Oryza sativa subsp. japonica (Rice).